A 526-amino-acid polypeptide reads, in one-letter code: Phosphoenolpyruvate carboxylase (526 aa).

The protein belongs to the PEPCase type 2 family. In terms of assembly, homotetramer. Mg(2+) serves as cofactor.

The enzyme catalyses oxaloacetate + phosphate = phosphoenolpyruvate + hydrogencarbonate. Functionally, catalyzes the irreversible beta-carboxylation of phosphoenolpyruvate (PEP) to form oxaloacetate (OAA), a four-carbon dicarboxylic acid source for the tricarboxylic acid cycle. The chain is Phosphoenolpyruvate carboxylase from Methanosarcina barkeri (strain Fusaro / DSM 804).